Consider the following 644-residue polypeptide: Exoribonuclease 2 (644 aa).

The RNB domain occupies 189–516; sequence REDLTALDFV…NHRLLKAVIK (328 aa). The region spanning 561 to 643 is the S1 motif domain; the sequence is DTRFAAEIVD…ETRSIIARPV (83 aa).

This sequence belongs to the RNR ribonuclease family. RNase II subfamily.

It is found in the cytoplasm. The enzyme catalyses Exonucleolytic cleavage in the 3'- to 5'-direction to yield nucleoside 5'-phosphates.. In terms of biological role, involved in mRNA degradation. Hydrolyzes single-stranded polyribonucleotides processively in the 3' to 5' direction. In Escherichia coli O139:H28 (strain E24377A / ETEC), this protein is Exoribonuclease 2.